A 466-amino-acid polypeptide reads, in one-letter code: E3 SUMO-protein ligase TRIM60 (466 aa).

An RING-type zinc finger spans residues Cys15–Gln56. The segment at Glu91–Ile132 adopts a B box-type zinc-finger fold. Zn(2+)-binding residues include Cys96, His99, Cys118, and His124. The stretch at Leu171–Leu223 forms a coiled coil. A B30.2/SPRY domain is found at Leu272 to Asp462.

Belongs to the TRIM/RBCC family.

E3 SUMO-protein ligase that mediates SUMOylation of TAB2 leading to inhibition of NF-kappa-B and MAPK pathways by suppressing the TRAF6/TAB2/TAK1 complex. This Mus musculus (Mouse) protein is E3 SUMO-protein ligase TRIM60 (Trim60).